The primary structure comprises 1253 residues: MNYIPTQTFYGRRWRPRPAARPWPLQATPVAPVVPDFQAQQMQQLISAVNALTMRQNAIAPARPPKPKKKKTTKPKPKTQPKKINGKTQQQKKKDKQADKKKKKPGKRERMCMKIENDCIFEVKHEGKVTGYACLVGDKVMKPAHVKGVIDNADLAKLAFKKSSKYDLECAQIPVHMRSDASKYTHEKPEGHYNWHHGAVQYSGGRFTIPTGAGKPGDSGRPIFDNKGRVVAIVLGGANEGSRTALSVVTWNKDMVTRVTPEGSEEWSAPLITAMCVLANATFPCFQPPCVPCCYENNAEATLRMLEDNVDRPGYYDLLQAALTCRNGTRHRRSVSQHFNVYKATRPYIAYCADCGAGHSCHSPVAIEAVRSEATDGMLKIQFSAQIGIDKSDNHDYTKIRYADGHAIENAVRSSLKVATSGDCFVHGTMGHFILAKCPPGEFLQVSIQDTRNAVRACRIQYHHDPQPVGREKFTIRPHYGKEIPCTTYQQTTAETVEEIDMHMPPDTPDRTLLSQQSGNVKITVGGKKVKYNCTCGTGNVGTTNSDMTINTCLIEQCHVSVTDHKKWQFNSPFVPRADEPARKGKVHIPFPLDNITCRVPMAREPTVIHGKREVTLHLHPDHPTLFSYRTLGEDPQYHEEWVTAAVERTIPVPVDGMEYHWGNNDPVRLWSQLTTEGKPHGWPHQIVQYYYGLYPAATVSAVVGMSLLALISIFASCYMLVAARSKCLTPYALTPGAAVPWTLGILCCAPRAHAASVAETMAYLWDQNQALFWLEFAAPVACILIITYCLRNVLCCCKSLSFLVLLSLGATARAYEHSTVMPNVVGFPYKAHIERPGYSPLTLQMQVVETSLEPTLNLEYITCEYKTVVPSPYVKCCGASECSTKEKPDYQCKVYTGVYPFMWGGAYCFCDSENTQLSEAYVDRSDVCRHDHASAYKAHTASLKAKVRVMYGNVNQTVDVYVNGDHAVTIGGTQFIFGPLSSAWTPFDNKIVVYKDEVFNQDFPPYGSGQPGRFGDIQSRTVESNDLYANTALKLARPSPGMVHVPYTQTPSGFKYWLKEKGTALNTKAPFGCQIKTNPVRAMNCAVGNIPVSMNLPDSAFTRIVEAPTIIDLTCTVATCTHSSDFGGVLTLTYKTNKNGDCSVHSHSNVATLQEATAKVKTAGKVTLHFSTASASPSFVVSLCSARATCSASCEPPKDHIVPYAASHSNVVFPDMSGTALSWVQKISGGLGAFAIGAILVLVVVTCIGLRR.

Residues 37-71 are host transcription inhibition; that stretch reads FQAQQMQQLISAVNALTMRQNAIAPARPPKPKKKK. Residues 58–109 are disordered; it reads AIAPARPPKPKKKKTTKPKPKTQPKKINGKTQQQKKKDKQADKKKKKPGKRE. The short motif at 64-105 is the Nuclear localization signal element; sequence PPKPKKKKTTKPKPKTQPKKINGKTQQQKKKDKQADKKKKKP. Positions 65-107 are enriched in basic residues; that stretch reads PKPKKKKTTKPKPKTQPKKINGKTQQQKKKDKQADKKKKKPGK. The interval 87-120 is binding to the viral RNA; the sequence is KTQQQKKKDKQADKKKKKPGKRERMCMKIENDCI. The segment at 105 to 119 is ribosome-binding; it reads PGKRERMCMKIENDC. C119 and C134 are oxidised to a cystine. Positions 119–267 constitute a Peptidase S3 domain; it reads CIFEVKHEGK…RVTPEGSEEW (149 aa). The Charge relay system role is filled by H145. Residues 150-160 carry the Nuclear export signal motif; that stretch reads IDNADLAKLAF. The interval 161-166 is interaction with spike glycoprotein E2; the sequence is KKSSKY. D167 serves as the catalytic Charge relay system. The segment at 189 to 199 is dimerization of the capsid protein; the sequence is PEGHYNWHHGA. The active-site Charge relay system is S219. The dimerization of the capsid protein stretch occupies residues 225–229; that stretch reads DNKGR. Topologically, residues 268-701 are extracellular; sequence SAPLITAMCV…YGLYPAATVS (434 aa). Disulfide bonds link C276–C285, C290–C294, and C293–C325. N-linked (GlcNAc...) asparagine; by host glycosylation is present at N280. N327 carries an N-linked (GlcNAc...) asparagine; by host glycan. 6 disulfide bridges follow: C352–C458, C355–C361, C424–C438, C486–C598, C534–C558, and C536–C553. N-linked (GlcNAc...) asparagine; by host glycosylation occurs at N533. A glycan (N-linked (GlcNAc...) asparagine; by host) is linked at N595. Residues 702–722 traverse the membrane as a helical segment; the sequence is AVVGMSLLALISIFASCYMLV. C718 carries the S-stearoyl cysteine; by host lipid modification. The interval 723-727 is interaction with the capsid protein; sequence AARSK. Over 723–755 the chain is Cytoplasmic; that stretch reads AARSKCLTPYALTPGAAVPWTLGILCCAPRAHA. C728 carries the S-stearoyl cysteine; by host lipid modification. Residues 728 to 748 form a transient transmembrane before p62-6K protein processing region; the sequence is CLTPYALTPGAAVPWTLGILC. C728 and C749 are joined by a disulfide. S-palmitoyl cysteine; by host attachment occurs at residues C748 and C749. At 756-770 the chain is on the extracellular side; it reads ASVAETMAYLWDQNQ. The helical transmembrane segment at 771 to 791 threads the bilayer; sequence ALFWLEFAAPVACILIITYCL. R792 is a topological domain (cytoplasmic). A helical transmembrane segment spans residues 793 to 813; it reads NVLCCCKSLSFLVLLSLGATA. Topologically, residues 814–1230 are extracellular; that stretch reads RAYEHSTVMP…ALSWVQKISG (417 aa). 4 disulfides stabilise this stretch: C864–C929, C877–C909, C878–C911, and C883–C893. The segment at 899-916 is E1 fusion peptide loop; sequence VYPFMWGGAYCFCDSENT. N-linked (GlcNAc...) asparagine; by host glycans are attached at residues N956 and N1085. 4 disulfides stabilise this stretch: C1074–C1086, C1116–C1191, C1121–C1195, and C1143–C1185. An E1-DIII; interaction with host receptor VLDLR region spans residues 1112–1192; it reads IDLTCTVATC…SLCSARATCS (81 aa). The helical transmembrane segment at 1231-1251 threads the bilayer; that stretch reads GLGAFAIGAILVLVVVTCIGL. The S-stearoyl cysteine; by host moiety is linked to residue C1248. Residues 1252-1253 are Cytoplasmic-facing; the sequence is RR.

Homodimer. Homomultimer. Interacts with host karyopherin KPNA4; this interaction allows the nuclear import of the viral capsid protein. Interacts with spike glycoprotein E2. Interacts with host IRAK1; the interaction leads to inhibition of IRAK1-dependent signaling. As to quaternary structure, the precursor of protein E3/E2 and E1 form a heterodimer shortly after synthesis. In terms of assembly, the precursor of protein E3/E2 and E1 form a heterodimer shortly after synthesis. Processing of the precursor of protein E3/E2 into E2 and E3 results in a heterodimer of the spike glycoproteins E2 and E1. Spike at virion surface are constituted of a trimer of E2-E1 heterodimers. E2-E1 heterodimers interact with host VLDLR or LRP8/APOER2 to mediate viral entry. After target cell attachment and endocytosis, E1 change conformation to form homotrimers. Interacts with 6K protein. Interacts (via E1-DIII) with host VLDLR (via class A repeats); this interaction mediates viral entry into host cell. Interacts with spike glycoprotein E1. Processing of the precursor of protein E3/E2 into E2 and E3 results in a heterodimer of the spike glycoproteins E2 and E1. Spike at virion surface are constituted of a trimer of E2-E1 heterodimers. E2-E1 heterodimers interact with host VLDLR or LRP8/APOER2 to mediate viral entry. Interacts with 6K protein. As to quaternary structure, oligomer. Interacts with spike glycoprotein E1. Interacts with spike glycoprotein E2. In terms of processing, specific enzymatic cleavages in vivo yield mature proteins. Capsid protein is auto-cleaved during polyprotein translation, unmasking a signal peptide at the N-terminus of the precursor of E3/E2. The remaining polyprotein is then targeted to the host endoplasmic reticulum, where host signal peptidase cleaves it into pE2, 6K and E1 proteins. pE2 is further processed to mature E3 and E2 by host furin in trans-Golgi vesicle. Protein processing process takes about 30 minutes at physiologic temperatures. The folding of the p62/6K/E1 precursor requires the formation of intrachain disulfide bonds and has been shown to involve a transient covalent interaction between the nascent and newly synthesized heterodimer and the host-cell chaperones, P4HB/PDI and PDIA3/ERp57. The folding pathway also includes non covalent interaction with human CANX/calnexin and CALR/calreticulin. Palmitoylated via thioester bonds. These palmitoylations may induce disruption of the C-terminus transmembrane. This would result in the reorientation of E2 C-terminus from lumenal to cytoplasmic side. Post-translationally, envelope E1, E2 and E3 proteins are N-glycosylated. In terms of processing, stearoylated. Palmitoylated via thioester bonds with about four covalently bound fatty acids per molecule.

The protein resides in the virion. Its subcellular location is the host cytoplasm. It localises to the host cell membrane. It is found in the host nucleus. The protein localises to the virion membrane. The protein resides in the host Golgi apparatus. Its subcellular location is the host trans-Golgi network. It localises to the host endoplasmic reticulum. It catalyses the reaction Autocatalytic release of the core protein from the N-terminus of the togavirus structural polyprotein by hydrolysis of a -Trp-|-Ser- bond.. Forms an icosahedral capsid with a T=4 symmetry composed of 240 copies of the capsid protein surrounded by a lipid membrane through which penetrate 80 spikes composed of trimers of E1-E2 heterodimers. The capsid protein binds to the viral RNA genome at a site adjacent to a ribosome binding site for viral genome translation following genome release. Possesses a protease activity that results in its autocatalytic cleavage from the nascent structural protein. Following its self-cleavage, the capsid protein transiently associates with ribosomes, and within several minutes the protein binds to viral RNA and rapidly assembles into icosahedric core particles. The resulting nucleocapsid eventually associates with the cytoplasmic domain of the spike glycoprotein E2 at the cell membrane, leading to budding and formation of mature virions. In case of infection, new virions attach to target cells and after clathrin-mediated endocytosis their membrane fuses with the host endosomal membrane. This leads to the release of the nucleocapsid into the cytoplasm, followed by an uncoating event necessary for the genomic RNA to become accessible. The uncoating might be triggered by the interaction of capsid proteins with ribosomes. Binding of ribosomes would release the genomic RNA since the same region is genomic RNA-binding and ribosome-binding. Specifically inhibits interleukin-1 receptor-associated kinase 1/IRAK1-dependent signaling during viral entry, representing a means by which the alphaviruses may evade innate immune detection and activation prior to viral gene expression. Functionally, provides the signal sequence for the translocation of the precursor of protein E3/E2 to the host endoplasmic reticulum. Furin-cleaved E3 remains associated with spike glycoprotein E1 and mediates pH protection of the latter during the transport via the secretory pathway. After virion release from the host cell, the assembly protein E3 is gradually released in the extracellular space. Its function is as follows. Plays a role in viral attachment to target host cell, by binding to the cell receptors VLDLR or LRP8/APOER2. The host LDLR can act as a cell receptor for viral entry. Synthesized as a p62 precursor which is processed by furin at the cell membrane just before virion budding, giving rise to E2-E1 heterodimer. The p62-E1 heterodimer is stable, whereas E2-E1 is unstable and dissociate at low pH. p62 is processed at the last step, presumably to avoid E1 fusion activation before its final export to cell surface. E2 C-terminus contains a transitory transmembrane that would be disrupted by palmitoylation, resulting in reorientation of the C-terminal tail from lumenal to cytoplasmic side. This step is critical since E2 C-terminus is involved in budding by interacting with capsid proteins. This release of E2 C-terminus in cytoplasm occurs lately in protein export, and precludes premature assembly of particles at the endoplasmic reticulum membrane. In terms of biological role, acts as a viroporin that participates in virus glycoprotein processing and transport to the plasma membrane, cell permeabilization and budding of viral particles. Disrupts the calcium homeostasis of the cell, probably at the endoplasmic reticulum level. This leads to cytoplasmic calcium elevation. Because of its lipophilic properties, the 6K protein is postulated to influence the selection of lipids that interact with the transmembrane domains of the glycoproteins, which, in turn, affects the deformability of the bilayer required for the extreme curvature that occurs as budding proceeds. Present in low amount in virions, about 3% compared to viral glycoproteins. Class II viral fusion protein. Fusion activity is inactive as long as E1 is bound to E2 in mature virion. After virus attachment to target cell via host VLDLR or LRP8/APOER2 and endocytosis, acidification of the endosome induces dissociation of E1/E2 heterodimer and concomitant trimerization of the E1 subunits. This E1 trimer is fusion active, and promotes release of viral nucleocapsid in cytoplasm after endosome and viral membrane fusion. Efficient fusion requires the presence of cholesterol and sphingolipid in the target membrane. Fusion is optimal at levels of about 1 molecule of cholesterol per 2 molecules of phospholipids, and is specific for sterols containing a 3-beta-hydroxyl group. This chain is Structural polyprotein, found in Aedes (Middle-African hedgehog).